A 382-amino-acid chain; its full sequence is uncharacterized protein (382 aa).

Transmembrane regions (helical) follow at residues 8–28 (VLLL…LNTL), 39–61 (PTWQ…TLLT), 75–95 (YLAS…VGFW), 102–122 (FIAG…LMCS), 131–151 (LLAA…LMIS), 157–177 (LMSV…PLLF), 204–224 (LGVN…GLMP), 236–256 (GIGF…WPIG), 265–284 (LLVL…AMLG), 289–311 (APAL…AWAC), 325–345 (ALLL…AMLM), and 349–369 (SDNL…LMLL).

This sequence belongs to the major facilitator superfamily. YcaD (TC 2.A.1.26) family.

It is found in the cell inner membrane. This is an uncharacterized protein from Enterobacter sp. (strain 638).